The following is a 369-amino-acid chain: Tryptophan 2,3-dioxygenase 2 (369 aa).

Substrate contacts are provided by residues 36–40 (FIVVH) and Arg107. Position 303 (His303) interacts with heme. Thr317 contributes to the substrate binding site.

This sequence belongs to the tryptophan 2,3-dioxygenase family. Homotetramer. Requires heme as cofactor.

It catalyses the reaction L-tryptophan + O2 = N-formyl-L-kynurenine. It functions in the pathway amino-acid degradation; L-tryptophan degradation via kynurenine pathway; L-kynurenine from L-tryptophan: step 1/2. Heme-dependent dioxygenase that catalyzes the oxidative cleavage of the L-tryptophan (L-Trp) pyrrole ring and converts L-tryptophan to N-formyl-L-kynurenine. Catalyzes the oxidative cleavage of the indole moiety. This is Tryptophan 2,3-dioxygenase 2 from Ralstonia nicotianae (strain ATCC BAA-1114 / GMI1000) (Ralstonia solanacearum).